We begin with the raw amino-acid sequence, 716 residues long: Cytoplasmic polyadenylation element-binding protein 3 (716 aa).

Over residues 1–11 the composition is skewed to basic and acidic residues; that stretch reads MQDDLLMDKSK. Disordered regions lie at residues 1–118 and 162–209; these read MQDD…WSTG and AQTQ…RSAA. Composition is skewed to low complexity over residues 13–31 and 54–63; these read QPQSQQQQRQQQQQQQQLQ and SSAVPALSPA. A compositionally biased stretch (pro residues) spans 91–100; it reads PQQPPPPQEP. Polar residues predominate over residues 107–118; the sequence is LSPSFGSTWSTG. The span at 169-186 shows a compositional bias: pro residues; sequence QPPPPAPQPPQPAQPPQA. Residues 187–209 show a composition bias toward low complexity; it reads QPSQQRRSPASPSQAPYAQRSAA. A phosphoserine mark is found at Ser194, Ser197, and Ser291. The residue at position 309 (Arg309) is an Asymmetric dimethylarginine. Residues Ser419 and Ser420 each carry the phosphoserine modification. RRM domains are found at residues 459-550 and 567-649; these read RKVF…PWNL and KTIF…PYVL.

This sequence belongs to the RRM CPEB family. Following synaptic activity, aggregates to form amyloid-like oligomers. Aggregation requires an intact actin cytoskeleton. Interacts with STAT5B; this inhibits STAT5B-mediated transcriptional activation. Interacts with E3 ubiquitin-protein ligase NEURL1; this leads to monoubiquitination and activation of CPEB3. Interacts with CAPN2; this leads to cleavage of CPEB3. Interacts (via C-terminal RNA-binding region) with TOB1; TOB1 also binds CNOT7/CAF1 and recruits it to CPEB3 to form a ternary complex. Interacts with SUMO-conjugating enzyme UBC9. Interacts with IPO5; the interaction is enhanced in a RAN-regulated manner following neuronal stimulation and mediates CPEB3 nuclear import. Interacts with exportin XPO1/CRM1. In terms of processing, activated by NEURL1-mediated monoubiquitination, resulting in the growth of new dendritic spines and increased levels of GRIA1 and GRIA2. NEURL1-mediated monoubiquitination facilitates synaptic plasticity and hippocampal-dependent memory storage. Post-translationally, under basal unstimulated conditions when CPEB3 is mainly unaggregated, sumoylated and acts as a translational repressor. Following neuronal stimulation, becomes desumoylated and aggregated which is required for the translation of mRNA targets and for dendritic filopodia formation. Following neuronal stimulation, cleaved by CAPN2 which abolishes its translational repressor activity, leading to translation of CPEB3 target mRNAs. In terms of processing, phosphorylation is enhanced by neuronal stimulation. In terms of tissue distribution, highly expressed in brain (at protein level). In brain, expressed in the hippocampus, granule cells and interneurons of the cerebellum, and mitral cells of the olfactory bulb (at protein level). Detected in the spinal cord and in peripheral dorsal root ganglia (at protein level). In the retina, strongly expressed in the retinal ganglion layer and, to a lesser extent, in the inner margin of the inner nuclear layer with expression also detected in the inner and outer plexiform layers (at protein level). Highly expressed in brain and heart, less in liver, kidney, embryo, skeletal muscle, lung and ovary. Weakly expressed in granular cells of dentate gyrus and the pyramidal cells of CA3 and CA1 of the hippocampus.

It localises to the cytoplasm. The protein localises to the nucleus. Its subcellular location is the synapse. It is found in the cell projection. The protein resides in the dendrite. It localises to the postsynaptic density. Its function is as follows. Sequence-specific RNA-binding protein which acts as a translational repressor in the basal unstimulated state but, following neuronal stimulation, acts as a translational activator. In contrast to CPEB1, does not bind to the cytoplasmic polyadenylation element (CPE), a uridine-rich sequence element within the mRNA 3'-UTR, but binds to a U-rich loop within a stem-loop structure. Required for the consolidation and maintenance of hippocampal-based long term memory. In the basal state, binds to the mRNA 3'-UTR of the glutamate receptors GRIA1 and GRIA2 and negatively regulates their translation. Also represses the translation of DLG4, GRIN1 GRIN2A and GRIN2B. When activated, acts as a translational activator of GRIA1 and GRIA2. In the basal state, suppresses SUMO2 translation but activates it following neuronal stimulation. Binds to the 3'-UTR of TRPV1 mRNA and represses TRPV1 translation which is required to maintain normal thermoception. Binds actin mRNA, leading to actin translational repression in the basal state and to translational activation following neuronal stimulation. Negatively regulates target mRNA levels by binding to TOB1 which recruits CNOT7/CAF1 to a ternary complex and this leads to target mRNA deadenylation and decay. In addition to its role in translation, binds to and inhibits the transcriptional activation activity of STAT5B without affecting its dimerization or DNA-binding activity. This, in turn, represses transcription of the STAT5B target gene EGFR which has been shown to play a role in enhancing learning and memory performance. In contrast to CPEB1, CPEB2 and CPEB4, not required for cell cycle progression. This is Cytoplasmic polyadenylation element-binding protein 3 (Cpeb3) from Mus musculus (Mouse).